A 470-amino-acid polypeptide reads, in one-letter code: Xaa-Pro aminopeptidase 2 (470 aa).

D287, D299, H382, E413, and E437 together coordinate Mn(2+).

Belongs to the peptidase M24B family. In terms of assembly, homodimer. It depends on Mn(2+) as a cofactor.

The catalysed reaction is Release of any N-terminal amino acid, including proline, that is linked to proline, even from a dipeptide or tripeptide.. In Streptomyces coelicolor (strain ATCC BAA-471 / A3(2) / M145), this protein is Xaa-Pro aminopeptidase 2 (pepP2).